The chain runs to 376 residues: N-acetyldiaminopimelate deacetylase (376 aa).

The active site involves aspartate 69. Glutamate 127 functions as the Proton acceptor in the catalytic mechanism.

The protein belongs to the peptidase M20A family. N-acetyldiaminopimelate deacetylase subfamily.

It catalyses the reaction N-acetyl-(2S,6S)-2,6-diaminopimelate + H2O = (2S,6S)-2,6-diaminopimelate + acetate. The protein operates within amino-acid biosynthesis; L-lysine biosynthesis via DAP pathway; LL-2,6-diaminopimelate from (S)-tetrahydrodipicolinate (acetylase route): step 3/3. Catalyzes the conversion of N-acetyl-diaminopimelate to diaminopimelate and acetate. The protein is N-acetyldiaminopimelate deacetylase of Lactococcus lactis subsp. cremoris (strain SK11).